Here is a 1256-residue protein sequence, read N- to C-terminus: Bifunctional autolysin (1256 aa).

The first 29 residues, 1–29 (MAKKFNYKLPSMVALTLVGSAVTAHQVQA), serve as a signal peptide directing secretion. A compositionally biased stretch (polar residues) spans 103–138 (GDTRANQSATTNNTQPVAKSTSTTAPKTNTNVTNAG). Disordered stretches follow at residues 103-151 (GDTR…NSEN), 172-219 (KTAA…KYKP), and 419-440 (TQST…PSTG). Composition is skewed to low complexity over residues 172–196 (KTAA…KVTT) and 421–439 (STTT…KPST). The interval 199-775 (ASAQPRSVAA…AVAQPKTAVK (577 aa)) is N-acetylmuramoyl-L-alanine amidase. 7 GW domains span residues 443–517 (TVAA…YNTA), 519–593 (SPVN…DTAK), 612–686 (TVSS…YNNA), 688–762 (SPVN…VPAA), 784–859 (TTQT…VQNL), 861–936 (KEVK…APTA), and 943–1017 (AAKD…KELI). The endo-beta-N-acetylglucosaminidase stretch occupies residues 776–1256 (AYTVTKPQTT…GKYFDIPQYK (481 aa)).

The protein in the N-terminal section; belongs to the N-acetylmuramoyl-L-alanine amidase 2 family. This sequence in the C-terminal section; belongs to the glycosyl hydrolase 73 family. As to quaternary structure, oligomer; forms a ring structure at the cell surface which is important for efficient partitioning of daughter cells after cell division. Post-translationally, undergoes proteolytic processing to generate the two extracellular lytic enzymes, probably at the septal region on the cell surface.

The protein resides in the secreted. The enzyme catalyses Hydrolyzes the link between N-acetylmuramoyl residues and L-amino acid residues in certain cell-wall glycopeptides.. It carries out the reaction an N(4)-(oligosaccharide-(1-&gt;3)-[oligosaccharide-(1-&gt;6)]-beta-D-Man-(1-&gt;4)-beta-D-GlcNAc-(1-&gt;4)-alpha-D-GlcNAc)-L-asparaginyl-[protein] + H2O = an oligosaccharide-(1-&gt;3)-[oligosaccharide-(1-&gt;6)]-beta-D-Man-(1-&gt;4)-D-GlcNAc + N(4)-(N-acetyl-beta-D-glucosaminyl)-L-asparaginyl-[protein]. Functionally, endohydrolysis of the di-N-acetylchitobiosyl unit in high-mannose glycopeptides and glycoproteins containing the -[(Man)5(GlcNAc)2]-Asn structure. One N-acetyl-D-glucosamine residue remains attached to the protein; the rest of the oligosaccharide is released intact. Cleaves the peptidoglycan connecting the daughter cells at the end of the cell division cycle, resulting in the separation of the two newly divided cells. Acts as an autolysin in penicillin-induced lysis. This Staphylococcus aureus (strain COL) protein is Bifunctional autolysin (atl).